Here is a 422-residue protein sequence, read N- to C-terminus: Interleukin-11 receptor subunit alpha (422 aa).

An N-terminal signal peptide occupies residues 1–22; it reads MSSSCSGLSRVLVAVATALVSA. At 24–370 the chain is on the extracellular side; sequence SPCPQAWGPP…DSVEQVAVLV (347 aa). The Ig-like C2-type domain occupies 27–110; sequence PQAWGPPGVQ…LGGTVTLQLG (84 aa). 3 disulfide bridges follow: Cys-48–Cys-94, Cys-120–Cys-130, and Cys-170–Cys-180. 2 Fibronectin type-III domains span residues 112–219 and 220–317; these read PPAR…LRPD and PPQG…TPST. Residue Asn-127 is glycosylated (N-linked (GlcNAc...) asparagine). N-linked (GlcNAc...) asparagine glycosylation occurs at Asn-194. Positions 304 to 308 match the WSXWS motif motif; it reads WSTWS. Residues 335–355 are disordered; it reads EVEPQVDSPAPPRPSLQPHPR. The helical transmembrane segment at 371–391 threads the bilayer; sequence SLGILSFLGLVAGALALGLWL. Residues 392-422 are Cytoplasmic-facing; it reads RLRRGGKDGSPKPGFLASVIPVDRHPGAPNL.

It belongs to the type I cytokine receptor family. Type 3 subfamily. As to quaternary structure, on IL11 binding, forms a multimer complex with IL6ST/gp130. A short soluble form is also released from the membrane by proteolysis. The sIL11RA is formed either by limited proteolysis of membrane-bound receptors, a process referred to as ectodomain shedding, or directly secreted from the cells after alternative mRNA splicing. mIL11RA is cleaved by the proteases ADAM10, ELANE and PRTN3.

It localises to the membrane. The protein resides in the secreted. In terms of biological role, receptor for interleukin-11 (IL11). The receptor systems for IL6, LIF, OSM, CNTF, IL11 and CT1 can utilize IL6ST for initiating signal transmission. The IL11/IL11RA/IL6ST complex may be involved in the control of proliferation and/or differentiation of skeletogenic progenitor or other mesenchymal cells. Essential for the normal development of craniofacial bones and teeth. Restricts suture fusion and tooth number. Its function is as follows. Soluble form of IL11 receptor (sIL11RA) that acts as an agonist of IL11 activity. The IL11:sIL11RA complex binds to IL6ST/gp130 on cell surfaces and induces signaling also on cells that do not express membrane-bound IL11RA in a process called IL11 trans-signaling. The polypeptide is Interleukin-11 receptor subunit alpha (IL11RA) (Pongo abelii (Sumatran orangutan)).